The primary structure comprises 434 residues: Histidinol dehydrogenase (434 aa).

Residues tyrosine 129, glutamine 191, and asparagine 214 each contribute to the NAD(+) site. The substrate site is built by serine 240, glutamine 262, and histidine 265. Zn(2+) contacts are provided by glutamine 262 and histidine 265. Active-site proton acceptor residues include glutamate 329 and histidine 330. The substrate site is built by histidine 330, aspartate 363, glutamate 417, and histidine 422. Residue aspartate 363 participates in Zn(2+) binding. Histidine 422 contributes to the Zn(2+) binding site.

It belongs to the histidinol dehydrogenase family. The cofactor is Zn(2+).

The catalysed reaction is L-histidinol + 2 NAD(+) + H2O = L-histidine + 2 NADH + 3 H(+). Its pathway is amino-acid biosynthesis; L-histidine biosynthesis; L-histidine from 5-phospho-alpha-D-ribose 1-diphosphate: step 9/9. Its function is as follows. Catalyzes the sequential NAD-dependent oxidations of L-histidinol to L-histidinaldehyde and then to L-histidine. The polypeptide is Histidinol dehydrogenase (Colwellia psychrerythraea (strain 34H / ATCC BAA-681) (Vibrio psychroerythus)).